The following is a 298-amino-acid chain: MDKKSSHPAGAARDILIELRNAGVYRDGRWLVRNVDLSVERGEIVTLIGPNGAGKSTAAKMALHILKPDEGMVSHKPGLRIGYVPQKINIDRTLPLSVERLMTLTGPLPRKEIDAALEAVGIAHLAKAETAHLSGGEFQRALMARALARKPDIMVLDEPVQGVDFSGEAALYELIARLRDDTGCGVLLSSHDLHLVMAATDRVICLNGHVCCSGTPRDVTSSPEYVRLFGSRAVGPLAVYEHHHDHTHLPDGRVLYADGTTADPIAGSTMGPRGHCHVEDGHHHDHEHHHHEGGQPRA.

In terms of domain architecture, ABC transporter spans 17–232; that stretch reads IELRNAGVYR…PEYVRLFGSR (216 aa). 49–56 serves as a coordination point for ATP; that stretch reads GPNGAGKS. The tract at residues 273-298 is disordered; the sequence is RGHCHVEDGHHHDHEHHHHEGGQPRA. Basic and acidic residues predominate over residues 276–298; that stretch reads CHVEDGHHHDHEHHHHEGGQPRA.

The protein belongs to the ABC transporter superfamily. Zinc importer (TC 3.A.1.15.5) family. The complex is composed of two ATP-binding proteins (ZnuC), two transmembrane proteins (ZnuB) and a solute-binding protein (ZnuA).

It localises to the cell inner membrane. The enzyme catalyses Zn(2+)(out) + ATP(in) + H2O(in) = Zn(2+)(in) + ADP(in) + phosphate(in) + H(+)(in). In terms of biological role, part of the ABC transporter complex ZnuABC involved in zinc import. Responsible for energy coupling to the transport system. In Brucella suis biovar 1 (strain 1330), this protein is Zinc import ATP-binding protein ZnuC.